The primary structure comprises 292 residues: 4-hydroxy-tetrahydrodipicolinate synthase (292 aa).

Thr45 lines the pyruvate pocket. Catalysis depends on Tyr133, which acts as the Proton donor/acceptor. Lys162 functions as the Schiff-base intermediate with substrate in the catalytic mechanism. Residue Ile204 participates in pyruvate binding.

The protein belongs to the DapA family. In terms of assembly, homotetramer; dimer of dimers.

The protein localises to the cytoplasm. The enzyme catalyses L-aspartate 4-semialdehyde + pyruvate = (2S,4S)-4-hydroxy-2,3,4,5-tetrahydrodipicolinate + H2O + H(+). Its pathway is amino-acid biosynthesis; L-lysine biosynthesis via DAP pathway; (S)-tetrahydrodipicolinate from L-aspartate: step 3/4. In terms of biological role, catalyzes the condensation of (S)-aspartate-beta-semialdehyde [(S)-ASA] and pyruvate to 4-hydroxy-tetrahydrodipicolinate (HTPA). The polypeptide is 4-hydroxy-tetrahydrodipicolinate synthase (Nitratidesulfovibrio vulgaris (strain DSM 19637 / Miyazaki F) (Desulfovibrio vulgaris)).